We begin with the raw amino-acid sequence, 182 residues long: ATP-dependent protease subunit HslV (182 aa).

Thr10 is a catalytic residue. Positions 164, 167, and 170 each coordinate Na(+).

The protein belongs to the peptidase T1B family. HslV subfamily. As to quaternary structure, a double ring-shaped homohexamer of HslV is capped on each side by a ring-shaped HslU homohexamer. The assembly of the HslU/HslV complex is dependent on binding of ATP.

Its subcellular location is the cytoplasm. The enzyme catalyses ATP-dependent cleavage of peptide bonds with broad specificity.. Its activity is regulated as follows. Allosterically activated by HslU binding. Functionally, protease subunit of a proteasome-like degradation complex believed to be a general protein degrading machinery. The protein is ATP-dependent protease subunit HslV of Chelativorans sp. (strain BNC1).